The sequence spans 255 residues: Indole-3-glycerol phosphate synthase (255 aa).

It belongs to the TrpC family.

It catalyses the reaction 1-(2-carboxyphenylamino)-1-deoxy-D-ribulose 5-phosphate + H(+) = (1S,2R)-1-C-(indol-3-yl)glycerol 3-phosphate + CO2 + H2O. The protein operates within amino-acid biosynthesis; L-tryptophan biosynthesis; L-tryptophan from chorismate: step 4/5. The protein is Indole-3-glycerol phosphate synthase of Streptococcus pneumoniae (strain Hungary19A-6).